The following is a 176-amino-acid chain: ATP synthase subunit delta (176 aa).

The protein belongs to the ATPase delta chain family. F-type ATPases have 2 components, F(1) - the catalytic core - and F(0) - the membrane proton channel. F(1) has five subunits: alpha(3), beta(3), gamma(1), delta(1), epsilon(1). F(0) has three main subunits: a(1), b(2) and c(10-14). The alpha and beta chains form an alternating ring which encloses part of the gamma chain. F(1) is attached to F(0) by a central stalk formed by the gamma and epsilon chains, while a peripheral stalk is formed by the delta and b chains.

The protein resides in the cell inner membrane. Functionally, f(1)F(0) ATP synthase produces ATP from ADP in the presence of a proton or sodium gradient. F-type ATPases consist of two structural domains, F(1) containing the extramembraneous catalytic core and F(0) containing the membrane proton channel, linked together by a central stalk and a peripheral stalk. During catalysis, ATP synthesis in the catalytic domain of F(1) is coupled via a rotary mechanism of the central stalk subunits to proton translocation. This protein is part of the stalk that links CF(0) to CF(1). It either transmits conformational changes from CF(0) to CF(1) or is implicated in proton conduction. The chain is ATP synthase subunit delta from Campylobacter curvus (strain 525.92).